The following is a 1026-amino-acid chain: Probable DNA-directed RNA polymerase II subunit RPB1 homolog (1026 aa).

Zn(2+)-binding residues include cysteine 62, cysteine 65, cysteine 72, histidine 75, cysteine 102, cysteine 105, and cysteine 142. Mg(2+) contacts are provided by aspartate 588, aspartate 590, and aspartate 592.

The protein belongs to the RNA polymerase beta' chain family.

It catalyses the reaction RNA(n) + a ribonucleoside 5'-triphosphate = RNA(n+1) + diphosphate. Its function is as follows. Component of the DNA-dependent RNA polymerase that catalyzes the transcription of DNA into RNA using the four ribonucleoside triphosphates as substrates. Largest and catalytic component of RNA polymerase II which synthesizes mRNA precursors and many functional non-coding RNAs. Forms the polymerase active center together with the second largest subunit. This Acheta domesticus (House cricket) protein is Probable DNA-directed RNA polymerase II subunit RPB1 homolog.